The primary structure comprises 439 residues: Chaperone SurA (439 aa).

Residues 1–27 (MRRISSRLSLVLFAALSCATALFPAHA) form the signal peptide. PpiC domains follow at residues 180 to 281 (GEEF…KLLD) and 293 to 391 (LEQT…QVEA).

The protein resides in the periplasm. It catalyses the reaction [protein]-peptidylproline (omega=180) = [protein]-peptidylproline (omega=0). Functionally, chaperone involved in the correct folding and assembly of outer membrane proteins. Recognizes specific patterns of aromatic residues and the orientation of their side chains, which are found more frequently in integral outer membrane proteins. May act in both early periplasmic and late outer membrane-associated steps of protein maturation. This is Chaperone SurA from Aromatoleum aromaticum (strain DSM 19018 / LMG 30748 / EbN1) (Azoarcus sp. (strain EbN1)).